The chain runs to 85 residues: Putative membrane protein insertion efficiency factor (85 aa).

Belongs to the UPF0161 family.

Its subcellular location is the cell inner membrane. Could be involved in insertion of integral membrane proteins into the membrane. In Fervidobacterium nodosum (strain ATCC 35602 / DSM 5306 / Rt17-B1), this protein is Putative membrane protein insertion efficiency factor.